The chain runs to 423 residues: Histone deacetylase 14, chloroplastic (423 aa).

A chloroplast-targeting transit peptide spans 1–44 (MSMALIVRPFFVPGSAGISGSRNICKKNQWRKYLLKPSGSSINC). Positions 62 to 392 (DARLIYSVSA…FRALLGEDSL (331 aa)) are histone deacetylase. The active-site Proton donor/acceptor is H202. Zn(2+)-binding residues include D239, H241, and D326.

It belongs to the histone deacetylase family. As to quaternary structure, interacts with PP2A2. Requires Zn(2+) as cofactor. As to expression, expressed in stems, leaves, flowers, siliques and mature seeds.

It localises to the nucleus. It is found in the cytoplasm. The protein localises to the plastid. Its subcellular location is the chloroplast stroma. The protein resides in the mitochondrion. The enzyme catalyses N-acetylserotonin + H2O = serotonin + acetate. The catalysed reaction is N-acetyltyramine + H2O = tyramine + acetate. It carries out the reaction N-acetyltryptamine + H2O = tryptamine + acetate. It catalyses the reaction melatonin + H2O = 5-methoxytryptamine + acetate. Its activity is regulated as follows. Its activity is inhibited by trichostatin A (TSA), a known histone deacetylase inhibitor. Regulates lysine acetylation levels of plastid proteins related to photosynthesis. Involved in the regulation of the activation state of RuBisCO, which is controlled by lysine acetylation of RuBisCO activase under low-light conditions. Associates with alpha- and beta-tubulins and deacetylate alpha-tubulin. Does not seem to be required for the cellular patterning in the root epidermis. Involved in the regulation of melatonin biosynthesis by catalyzing the deacetylation of N-acetylserotonin to produce serotonin. N-acetylserotonin is methylated by acetylserotonin O-methyltransferase (ASMT) to produce melatonin (N-acetyl-5-methoxytryptamine). Deacetylates melatonin to produce 5-methoxytryptamine. In vitro, deacetylates N-acetyltyramine and N-acetyltryptamine to produce tyramine and tryptamine, respectively. The sequence is that of Histone deacetylase 14, chloroplastic from Arabidopsis thaliana (Mouse-ear cress).